A 121-amino-acid chain; its full sequence is Large ribosomal subunit protein uL18 (121 aa).

It belongs to the universal ribosomal protein uL18 family. In terms of assembly, part of the 50S ribosomal subunit; part of the 5S rRNA/L5/L18/L25 subcomplex. Contacts the 5S and 23S rRNAs.

This is one of the proteins that bind and probably mediate the attachment of the 5S RNA into the large ribosomal subunit, where it forms part of the central protuberance. This Polaromonas naphthalenivorans (strain CJ2) protein is Large ribosomal subunit protein uL18.